The primary structure comprises 290 residues: 4-diphosphocytidyl-2-C-methyl-D-erythritol kinase (290 aa).

The active site involves lysine 14. 103–113 is a binding site for ATP; sequence PMGGGLGGGSS. Residue aspartate 145 is part of the active site.

This sequence belongs to the GHMP kinase family. IspE subfamily. As to quaternary structure, homodimer.

It carries out the reaction 4-CDP-2-C-methyl-D-erythritol + ATP = 4-CDP-2-C-methyl-D-erythritol 2-phosphate + ADP + H(+). The protein operates within isoprenoid biosynthesis; isopentenyl diphosphate biosynthesis via DXP pathway; isopentenyl diphosphate from 1-deoxy-D-xylulose 5-phosphate: step 3/6. In terms of biological role, catalyzes the phosphorylation of the position 2 hydroxy group of 4-diphosphocytidyl-2C-methyl-D-erythritol. This is 4-diphosphocytidyl-2-C-methyl-D-erythritol kinase from Pectobacterium carotovorum subsp. carotovorum (strain PC1).